Here is a 363-residue protein sequence, read N- to C-terminus: Chorismate synthase (363 aa).

2 residues coordinate NADP(+): Arg48 and Arg54. FMN-binding positions include 125 to 127 (RSS), 237 to 238 (NA), Gly277, 292 to 296 (KPTSS), and Arg318.

It belongs to the chorismate synthase family. In terms of assembly, homotetramer. It depends on FMNH2 as a cofactor.

The catalysed reaction is 5-O-(1-carboxyvinyl)-3-phosphoshikimate = chorismate + phosphate. It functions in the pathway metabolic intermediate biosynthesis; chorismate biosynthesis; chorismate from D-erythrose 4-phosphate and phosphoenolpyruvate: step 7/7. Catalyzes the anti-1,4-elimination of the C-3 phosphate and the C-6 proR hydrogen from 5-enolpyruvylshikimate-3-phosphate (EPSP) to yield chorismate, which is the branch point compound that serves as the starting substrate for the three terminal pathways of aromatic amino acid biosynthesis. This reaction introduces a second double bond into the aromatic ring system. In Pseudomonas fluorescens (strain Pf0-1), this protein is Chorismate synthase.